A 504-amino-acid chain; its full sequence is Catalase (504 aa).

A disordered region spans residues 1-25; sequence MSKQDGKLTGLFGAPVSDRENSMTA. Residues H56 and N129 contribute to the active site. Residue Y339 coordinates heme.

This sequence belongs to the catalase family. In terms of assembly, homodimer. Heme serves as cofactor.

It carries out the reaction 2 H2O2 = O2 + 2 H2O. Decomposes hydrogen peroxide into water and oxygen; serves to protect cells from the toxic effects of hydrogen peroxide. In Staphylococcus epidermidis (strain ATCC 35984 / DSM 28319 / BCRC 17069 / CCUG 31568 / BM 3577 / RP62A), this protein is Catalase (katA).